Reading from the N-terminus, the 402-residue chain is Galactoside 2-alpha-L-fucosyltransferase (402 aa).

Residues 1 to 6 (MRYNSN) lie on the Cytoplasmic side of the membrane. A helical; Signal-anchor for type II membrane protein membrane pass occupies residues 7 to 27 (YLMYFCLVLGIFANIYVIIKI). Topologically, residues 28–402 (TLGSSHILEY…TDLNGKISKY (375 aa)) are lumenal. N-linked (GlcNAc...) asparagine glycosylation is found at N119, N175, and N301.

Belongs to the glycosyltransferase 11 family. In terms of assembly, may form oligomers. In terms of processing, N-glycosylated. Expression is restricted to pharyngeal neurons and gland cells.

It localises to the golgi apparatus. Its subcellular location is the golgi stack membrane. Its pathway is protein modification; protein glycosylation. Its function is as follows. Selectively catalyzes the addition of fucose in alpha 1-2 linkage to Gal-beta-(1-&gt;3)-GalNAc-alpha-R, Gal-beta-(1-&gt;3)-(GlcNAc-beta-(1-&gt;6))-GalNAc-alpha-R and Gal-beta-(1-&gt;3)-GalNAc acceptors but not Gal-beta-(1-&gt;3)-GlcNAc-beta-(1-&gt;3)-Gal-beta-(1-&gt;4)-Glc in vitro. The protein is Galactoside 2-alpha-L-fucosyltransferase of Caenorhabditis elegans.